The primary structure comprises 222 residues: Glutathione S-transferase A1 (222 aa).

Position 1 is an N-acetylmethionine (Met-1). N-acetylalanine; in Glutathione S-transferase A1, N-terminally processed is present on Ala-2. Residues 3–83 form the GST N-terminal domain; the sequence is GKPTLHYFNG…YIATKYNLYG (81 aa). Lys-4 carries the post-translational modification N6-succinyllysine. Glutathione-binding positions include Tyr-9, Lys-45, 54-55, and 67-68; these read QV and QT. In terms of domain architecture, GST C-terminal spans 85-208; it reads DMKERALIDM…QPGSQRKPPT (124 aa).

The protein belongs to the GST superfamily. Alpha family. As to quaternary structure, homodimer or heterodimer of GSTA1 and GSTA2. Expressed in corpus luteum, adrenal gland, testis, liver, lung, thyroid and kidney.

It is found in the cytoplasm. The enzyme catalyses RX + glutathione = an S-substituted glutathione + a halide anion + H(+). It carries out the reaction prostaglandin A2 + glutathione = prostaglandin A2-S-(R)-glutathione. The catalysed reaction is prostaglandin J2 + glutathione = prostaglandin J2-S-(R)-glutathione. It catalyses the reaction (13S)-hydroperoxy-(9Z,11E)-octadecadienoate + 2 glutathione = (13S)-hydroxy-(9Z,11E)-octadecadienoate + glutathione disulfide + H2O. The enzyme catalyses androst-5-ene-3,17-dione = androst-4-ene-3,17-dione. Functionally, glutathione S-transferase that catalyzes the nucleophilic attack of the sulfur atom of glutathione on the electrophilic groups of a wide range of exogenous and endogenous compounds. Involved in the formation of glutathione conjugates of both prostaglandin A2 (PGA2) and prostaglandin J2 (PGJ2). It also catalyzes the isomerization of D5-androstene-3,17-dione (AD) into D4-androstene-3,17-dione and may therefore play an important role in hormone biosynthesis. Through its glutathione-dependent peroxidase activity toward the fatty acid hydroperoxide (13S)-hydroperoxy-(9Z,11E)-octadecadienoate/13-HPODE it is also involved in the metabolism of oxidized linoleic acid. This is Glutathione S-transferase A1 (GSTA1) from Bos taurus (Bovine).